Consider the following 142-residue polypeptide: MSESLVVCDVAEDLVEKLRKFRFRKETHNAAIIMKIDKDKRLVVLDEELEGVSPDELKDELPERQPRFIVYSYKYQHDDGRVSYPLCFIFSSPLGCKPEQQMMYAGSKNKLVQTAELTKVFEIRNTEDLTEEWLREKLGFFH.

Residue S2 is modified to N-acetylserine. In terms of domain architecture, ADF-H spans 4–139; that stretch reads SLVVCDVAED…TEEWLREKLG (136 aa).

It belongs to the actin-binding proteins ADF family. GMF subfamily. Post-translationally, phosphorylated; stimulated by phorbol ester.

This protein causes differentiation of brain cells, stimulation of neural regeneration, and inhibition of proliferation of tumor cells. The sequence is that of Glia maturation factor beta (Gmfb) from Rattus norvegicus (Rat).